We begin with the raw amino-acid sequence, 199 residues long: OPA3-like protein (199 aa).

A coiled-coil region spans residues 98–141; that stretch reads RSSEKDKKKEEALQNRFKNLEEKLEVQQETINNLTNVIEAIQSS.

Belongs to the OPA3 family.

This chain is OPA3-like protein, found in Dictyostelium discoideum (Social amoeba).